We begin with the raw amino-acid sequence, 108 residues long: Ig kappa chain V region K-25 (108 aa).

A framework-1 region spans residues 1–23; the sequence is AVELTQTPASVEAAVGGTVTIKC. The tract at residues 24 to 34 is complementarity-determining-1; sequence QASQBIYSYLS. The interval 35 to 49 is framework-2; sequence WYQQKPGQPPKLLIY. The complementarity-determining-2 stretch occupies residues 50 to 56; sequence KASTLAS. The framework-3 stretch occupies residues 57 to 88; it reads GVSSRFKGSGSGTEFTLTISDLZCADAATYYC. The complementarity-determining-3 stretch occupies residues 89 to 97; the sequence is QTYSYSSTY. A framework-4 region spans residues 98–107; it reads FGGGTEVVVK.

This chain is Ig kappa chain V region K-25, found in Oryctolagus cuniculus (Rabbit).